Reading from the N-terminus, the 1210-residue chain is ATP-dependent helicase/nuclease subunit A (1210 aa).

The UvrD-like helicase ATP-binding domain occupies 27 to 483 (QKRTAQQIEA…ILLKENFRSQ (457 aa)). Residue 48 to 55 (ASAGSGKT) coordinates ATP. Residues 512-798 (QLIAGSHAQT…NLMTIHKSKG (287 aa)) enclose the UvrD-like helicase C-terminal domain.

This sequence belongs to the helicase family. AddA subfamily. Heterodimer of AddA and AddB/RexB. Mg(2+) serves as cofactor.

The enzyme catalyses Couples ATP hydrolysis with the unwinding of duplex DNA by translocating in the 3'-5' direction.. The catalysed reaction is ATP + H2O = ADP + phosphate + H(+). Its function is as follows. The heterodimer acts as both an ATP-dependent DNA helicase and an ATP-dependent, dual-direction single-stranded exonuclease. Recognizes the chi site generating a DNA molecule suitable for the initiation of homologous recombination. The AddA nuclease domain is required for chi fragment generation; this subunit has the helicase and 3' -&gt; 5' nuclease activities. The protein is ATP-dependent helicase/nuclease subunit A of Streptococcus pyogenes serotype M5 (strain Manfredo).